A 353-amino-acid polypeptide reads, in one-letter code: Holliday junction branch migration complex subunit RuvB (353 aa).

The interval 4–190 is large ATPase domain (RuvB-L); that stretch reads HYIRFKIMTN…FGIPMRLNFY (187 aa). Residues Ile-29, Arg-30, Gly-71, Lys-74, Thr-75, Thr-76, 137 to 139, Arg-180, Tyr-190, and Arg-227 each bind ATP; that span reads EDF. Thr-75 is a binding site for Mg(2+). Residues 191–261 form a small ATPAse domain (RuvB-S) region; the sequence is NTEELKKVLN…ISDFGLNRLE (71 aa). Residues 264–353 form a head domain (RuvB-H) region; the sequence is RIGLDSNDYR…HQFNIFNEHE (90 aa). Arg-300, Arg-319, and Arg-324 together coordinate DNA.

It belongs to the RuvB family. Homohexamer. Forms an RuvA(8)-RuvB(12)-Holliday junction (HJ) complex. HJ DNA is sandwiched between 2 RuvA tetramers; dsDNA enters through RuvA and exits via RuvB. An RuvB hexamer assembles on each DNA strand where it exits the tetramer. Each RuvB hexamer is contacted by two RuvA subunits (via domain III) on 2 adjacent RuvB subunits; this complex drives branch migration. In the full resolvosome a probable DNA-RuvA(4)-RuvB(12)-RuvC(2) complex forms which resolves the HJ.

It localises to the cytoplasm. The catalysed reaction is ATP + H2O = ADP + phosphate + H(+). The RuvA-RuvB-RuvC complex processes Holliday junction (HJ) DNA during genetic recombination and DNA repair, while the RuvA-RuvB complex plays an important role in the rescue of blocked DNA replication forks via replication fork reversal (RFR). RuvA specifically binds to HJ cruciform DNA, conferring on it an open structure. The RuvB hexamer acts as an ATP-dependent pump, pulling dsDNA into and through the RuvAB complex. RuvB forms 2 homohexamers on either side of HJ DNA bound by 1 or 2 RuvA tetramers; 4 subunits per hexamer contact DNA at a time. Coordinated motions by a converter formed by DNA-disengaged RuvB subunits stimulates ATP hydrolysis and nucleotide exchange. Immobilization of the converter enables RuvB to convert the ATP-contained energy into a lever motion, pulling 2 nucleotides of DNA out of the RuvA tetramer per ATP hydrolyzed, thus driving DNA branch migration. The RuvB motors rotate together with the DNA substrate, which together with the progressing nucleotide cycle form the mechanistic basis for DNA recombination by continuous HJ branch migration. Branch migration allows RuvC to scan DNA until it finds its consensus sequence, where it cleaves and resolves cruciform DNA. The sequence is that of Holliday junction branch migration complex subunit RuvB from Rickettsia massiliae (strain Mtu5).